The chain runs to 170 residues: Ribosome maturation factor RimM (170 aa).

The region spanning 98–170 (PDEYYWVDLE…LIVVDWDPDF (73 aa)) is the PRC barrel domain.

This sequence belongs to the RimM family. In terms of assembly, binds ribosomal protein uS19.

Its subcellular location is the cytoplasm. Functionally, an accessory protein needed during the final step in the assembly of 30S ribosomal subunit, possibly for assembly of the head region. Essential for efficient processing of 16S rRNA. May be needed both before and after RbfA during the maturation of 16S rRNA. It has affinity for free ribosomal 30S subunits but not for 70S ribosomes. The chain is Ribosome maturation factor RimM from Xanthomonas campestris pv. campestris (strain 8004).